The primary structure comprises 757 residues: Vitamin K-dependent gamma-carboxylase (757 aa).

N-acetylalanine is present on Ala-2. Residues Ala-2–Asp-60 are Cytoplasmic-facing. The helical transmembrane segment at Pro-61–Gln-81 threads the bilayer. Residues Glu-82–Asp-113 lie on the Lumenal side of the membrane. Cys-99 and Cys-450 are joined by a disulfide. A helical membrane pass occupies residues Trp-114 to Cys-134. The Cytoplasmic portion of the chain corresponds to Tyr-135 to Arg-136. Residues Leu-137–Trp-157 form a helical membrane-spanning segment. At Asn-158 to Gln-292 the chain is on the lumenal side. Residues Leu-293–Ala-313 form a helical membrane-spanning segment. At Glu-314 to Gln-361 the chain is on the cytoplasmic side. The chain crosses the membrane as a helical span at residues Leu-362–Phe-382. Residues Leu-383–Phe-757 lie on the Lumenal side of the membrane. The tract at residues Glu-729–Phe-757 is disordered. Over residues Ser-734–Pro-745 the composition is skewed to polar residues. Positions Ser-746–Phe-757 are enriched in basic and acidic residues.

This sequence belongs to the vitamin K-dependent gamma-carboxylase family. In terms of assembly, monomer. May interact with CALU.

It is found in the endoplasmic reticulum membrane. The catalysed reaction is 4-carboxy-L-glutamyl-[protein] + 2,3-epoxyphylloquinone + H2O + H(+) = phylloquinol + L-glutamyl-[protein] + CO2 + O2. Its function is as follows. Mediates the vitamin K-dependent carboxylation of glutamate residues to calcium-binding gamma-carboxyglutamate (Gla) residues with the concomitant conversion of the reduced hydroquinone form of vitamin K to vitamin K epoxide. Catalyzes gamma-carboxylation of various proteins, such as blood coagulation factors (F2, F7, F9 and F10), osteocalcin (bglap and bglap2) or matrix Gla protein (MGP). This Mus musculus (Mouse) protein is Vitamin K-dependent gamma-carboxylase (Ggcx).